We begin with the raw amino-acid sequence, 694 residues long: Potassium-transporting ATPase ATP-binding subunit (694 aa).

The next 4 helical transmembrane spans lie at 36–56, 62–82, 218–238, and 249–269; these read VMFV…RDLI, LAFS…ANFA, IALN…TATI, and IPII…IGAL. The active-site 4-aspartylphosphate intermediate is D306. ATP-binding positions include D343, E347, 376 to 383, and K394; that span reads FTAQTRMS. Mg(2+) contacts are provided by D530 and D534. Transmembrane regions (helical) follow at residues 600 to 620, 628 to 648, and 666 to 686; these read FAII…LNVM, AILS…PLSL, and LVIY…LIDL.

This sequence belongs to the cation transport ATPase (P-type) (TC 3.A.3) family. Type IA subfamily. The system is composed of three essential subunits: KdpA, KdpB and KdpC.

It is found in the cell inner membrane. It carries out the reaction K(+)(out) + ATP + H2O = K(+)(in) + ADP + phosphate + H(+). Functionally, part of the high-affinity ATP-driven potassium transport (or Kdp) system, which catalyzes the hydrolysis of ATP coupled with the electrogenic transport of potassium into the cytoplasm. This subunit is responsible for energy coupling to the transport system and for the release of the potassium ions to the cytoplasm. This chain is Potassium-transporting ATPase ATP-binding subunit, found in Agrobacterium fabrum (strain C58 / ATCC 33970) (Agrobacterium tumefaciens (strain C58)).